Consider the following 502-residue polypeptide: 1-aminocyclopropane-1-carboxylate synthase-like protein 1 (502 aa).

A disordered region spans residues 15 to 35 (CPGSDSIQDLPSNKGDGLERE). Residue Glu106 participates in substrate binding. Position 324 is an N6-(pyridoxal phosphate)lysine (Lys324).

This sequence belongs to the class-I pyridoxal-phosphate-dependent aminotransferase family.

Its function is as follows. Does not catalyze the synthesis of 1-aminocyclopropane-1-carboxylate but is capable of catalyzing the deamination of L-vinylglycine. The sequence is that of 1-aminocyclopropane-1-carboxylate synthase-like protein 1 (ACCS) from Bos taurus (Bovine).